Here is a 174-residue protein sequence, read N- to C-terminus: Peptidyl-prolyl cis-trans isomerase D, mitochondrial (174 aa).

One can recognise a PPIase cyclophilin-type domain in the interval 10–173 (FFQIKQGNTP…AACVIEDCGQ (164 aa)).

The protein belongs to the cyclophilin-type PPIase family. PPIase D subfamily.

It localises to the mitochondrion. The enzyme catalyses [protein]-peptidylproline (omega=180) = [protein]-peptidylproline (omega=0). Binds cyclosporin A (CsA). CsA mediates some of its effects via an inhibitory action on PPIase. PPIases accelerate the folding of proteins. It catalyzes the cis-trans isomerization of proline imidic peptide bonds in oligopeptides. This is Peptidyl-prolyl cis-trans isomerase D, mitochondrial (cypD) from Dictyostelium discoideum (Social amoeba).